A 248-amino-acid chain; its full sequence is HTH-type transcriptional regulator GgaR (248 aa).

The region spanning 22–90 (TPLYIKFAET…RGYGTQINNI (69 aa)) is the HTH gntR-type domain. A DNA-binding region (H-T-H motif) is located at residues 50-69 (ERDLSQLTGVSRITVRKAMQ).

Senses ADP-glucose (ADPG), which is the substrate for glycogen elongation, as an effector. In the presence of ADPG, GgaR becomes inactive and derepresses the yegTUV operon, leading to glycogen accumulation. In contrast, in the absence of glucose, the concentration of ADPG decreases, GgaR becomes active, and glycogen accumulation is repressed. Functionally, transcriptional regulator that regulates glycogen accumulation in response to the amount of glucose available to the cell. Acts as a repressor of the yegTUV operon, which may be involved in glycogen accumulation. This chain is HTH-type transcriptional regulator GgaR, found in Escherichia coli O6:H1 (strain CFT073 / ATCC 700928 / UPEC).